Consider the following 151-residue polypeptide: MEKEQNKKTSSLNVLAIAGLQPYQKKTDEEYMNEKQMLHFKKILETWKNQLTIEINHTLLYIQDKSTNFPDPIDRAAQEEEFSLELRNRDRSRKLIKKIQETLKKIKDKDFGYCNSCAVEIGIRRLEARPTANLCIDCKTLAEIREKQMAG.

Zn(2+) is bound by residues cysteine 114, cysteine 117, cysteine 135, and cysteine 138. A dksA C4-type zinc finger spans residues 114–138; the sequence is CNSCAVEIGIRRLEARPTANLCIDC.

The protein belongs to the DksA family. Interacts directly with the RNA polymerase.

It localises to the cytoplasm. Functionally, transcription factor that acts by binding directly to the RNA polymerase (RNAP). Required for negative regulation of rRNA expression and positive regulation of several amino acid biosynthesis promoters. Also required for regulation of fis expression. The protein is RNA polymerase-binding transcription factor DksA of Buchnera aphidicola subsp. Schizaphis graminum (strain Sg).